The following is a 610-amino-acid chain: Elongation factor 4 (610 aa).

In terms of domain architecture, tr-type G spans 11-193 (ENIRNFSIIA…QIVEKVPAPS (183 aa)). GTP is bound by residues 23–28 (DHGKST) and 140–143 (NKID).

The protein belongs to the TRAFAC class translation factor GTPase superfamily. Classic translation factor GTPase family. LepA subfamily.

The protein localises to the cell membrane. The catalysed reaction is GTP + H2O = GDP + phosphate + H(+). Its function is as follows. Required for accurate and efficient protein synthesis under certain stress conditions. May act as a fidelity factor of the translation reaction, by catalyzing a one-codon backward translocation of tRNAs on improperly translocated ribosomes. Back-translocation proceeds from a post-translocation (POST) complex to a pre-translocation (PRE) complex, thus giving elongation factor G a second chance to translocate the tRNAs correctly. Binds to ribosomes in a GTP-dependent manner. The polypeptide is Elongation factor 4 (Streptococcus equi subsp. zooepidemicus (strain H70)).